A 185-amino-acid polypeptide reads, in one-letter code: Protein LURP-one-related 13 (185 aa).

It belongs to the LOR family.

Might be related to the phospholipid scramblase and tubby-like superfamily of membrane tethered transcription factors. The chain is Protein LURP-one-related 13 from Arabidopsis thaliana (Mouse-ear cress).